An 828-amino-acid chain; its full sequence is Calpain-A (828 aa).

One can recognise an EF-hand 1 domain in the interval 1-14 (MDDLRGFLRQAGQE). Residues 88 to 387 (LFEDPLFPAS…FDRVEICNLS (300 aa)) enclose the Calpain catalytic domain. Catalysis depends on residues C143, H299, and N327. A domain III region spans residues 388-557 (PDSLTEDQQN…TQNNMEENDD (170 aa)). Residues 558 to 577 (HVGYGGKADTITPGFPTPKP) form a linker region. A domain IV region spans residues 578–828 (IDPQKEGLRR…EEWIERTIYS (251 aa)). 4 consecutive EF-hand domains span residues 579–614 (DPQK…SMRD), 699–734 (FSKD…IAKW), 729–764 (SEIA…AGYH), and 764–799 (HLNN…IKTY). Ca(2+) is bound by residues D712, D714, S716, K718, E723, D742, T746, R748, and Q753.

It belongs to the peptidase C2 family. Post-translationally, undergoes calcium-dependent autolytic cleavage between Lys-54 and Asn-55, which is necessary for activation of the protein. In terms of tissue distribution, localized to the anterior and posterior embryonic poles just after fertilization. Becomes distributed around the polar buds and just below the pole cells of the posterior pole during cleavage cycles. During these nuclear divisions anterior localization disappears. Localized to actin caps that underlie the plasma membrane, immediately above each nucleus at cleavage cycles 8 and 9. Localized to a small set of nerve, midgut and blood cells in adults.

The protein localises to the cytoplasm. Activated by millimolar concentrations of calcium, and by phosphatidylinositol 4,5-diphosphate, phosphatidylinositol 4-monophosphate, phosphatidylinositol and phosphatidic acid. In terms of biological role, calcium-regulated non-lysosomal thiol-protease. Involved in the organization of the actin-related cytoskeleton during embryogenesis. This Drosophila melanogaster (Fruit fly) protein is Calpain-A (CalpA).